The sequence spans 469 residues: Phenolic glucoside malonyltransferase 1 (469 aa).

Met1 carries the N-acetylmethionine modification. His169 functions as the Proton acceptor in the catalytic mechanism. Residues 169–173 (HAVLD) carry the HXXXD motif motif. 291-292 (ST) serves as a coordination point for malonyl-CoA. Asp413 (proton acceptor) is an active-site residue. Residues 413-417 (DFGWG) carry the DFGWG motif motif.

This sequence belongs to the plant acyltransferase family. Phenolic glucoside malonyltransferase subfamily.

The catalysed reaction is a flavonol 3-O-beta-D-glucoside + malonyl-CoA = a flavonol 3-O-(6-O-malonyl-beta-D-glucoside) + CoA. It catalyses the reaction a flavonol 7-O-beta-D-glucoside + malonyl-CoA = a flavonol 7-O-(6-O-malonyl-beta-D-glucoside) + CoA. Malonyltransferase acting on xenobiotic glucosides. Has activity toward 2-Naphthol glucoside (2NAG), 1-Naphthol glucoside (1NAG), kaempferol 7-O-glucoside, kaempferol 3-O-glucoside, hydroxycoumarin glucosides, phenol-glucosides and isoflavone glucoside (daidzin), but not toward 4-coumaroyl glucoside, kaempferol 3,7-O-diglucoside, salicylic acid glucoside and phlorizin. In vivo, seems to be involved in the malonylation of 2-Naphthol glucoside while PMAT2 would be involved in the malonylation of 4-methylumbelliferone glucoside or 4-nitrophenyl glucoside. The polypeptide is Phenolic glucoside malonyltransferase 1 (PMAT1) (Arabidopsis thaliana (Mouse-ear cress)).